Consider the following 173-residue polypeptide: uncharacterized protein (173 aa).

Transmembrane regions (helical) follow at residues 13 to 35 (LQVI…PLLS), 50 to 72 (IIFI…FLGL), 107 to 129 (NYLI…KYLL), and 139 to 161 (GYLI…RLIL).

It localises to the cell membrane. This is an uncharacterized protein from Rickettsia prowazekii (strain Madrid E).